Consider the following 280-residue polypeptide: Digeranylgeranylglyceryl phosphate synthase (280 aa).

9 helical membrane passes run 4 to 24 (AAYL…AGIL), 27 to 47 (IIAT…VLTI), 83 to 103 (LMYA…FTPL), 104 to 124 (PLAG…SFLK), 128 to 148 (LIGN…GGAI), 150 to 170 (GTQG…VMLA), 199 to 219 (ATIY…LLLY), 222 to 242 (WGAF…FGAI), and 260 to 280 (KILK…AVLL).

The protein belongs to the UbiA prenyltransferase family. DGGGP synthase subfamily. It depends on Mg(2+) as a cofactor.

The protein localises to the cell membrane. It carries out the reaction sn-3-O-(geranylgeranyl)glycerol 1-phosphate + (2E,6E,10E)-geranylgeranyl diphosphate = 2,3-bis-O-(geranylgeranyl)-sn-glycerol 1-phosphate + diphosphate. The protein operates within membrane lipid metabolism; glycerophospholipid metabolism. Its function is as follows. Prenyltransferase that catalyzes the transfer of the geranylgeranyl moiety of geranylgeranyl diphosphate (GGPP) to the C2 hydroxyl of (S)-3-O-geranylgeranylglyceryl phosphate (GGGP). This reaction is the second ether-bond-formation step in the biosynthesis of archaeal membrane lipids. This Methanospirillum hungatei JF-1 (strain ATCC 27890 / DSM 864 / NBRC 100397 / JF-1) protein is Digeranylgeranylglyceryl phosphate synthase.